Consider the following 202-residue polypeptide: Hydrogenase expression/formation protein HoxM (202 aa).

The Ni(2+) site is built by Glu-15, Asp-61, and His-92.

Belongs to the peptidase A31 family.

Absolutely required for hydrogenase activity. Mediates the attachment of hydrogenase to the bacterial membrane; attachment is a requirement for enzymatic activity. The sequence is that of Hydrogenase expression/formation protein HoxM (hoxM) from Cupriavidus necator (strain ATCC 17699 / DSM 428 / KCTC 22496 / NCIMB 10442 / H16 / Stanier 337) (Ralstonia eutropha).